A 984-amino-acid polypeptide reads, in one-letter code: Mineralocorticoid receptor (984 aa).

A modulating region spans residues 1 to 602 (METKGYHSLP…STGSSRPSKI (602 aa)). The span at 231–243 (QGTPLTCSPNVEN) shows a compositional bias: polar residues. 2 disordered regions span residues 231 to 329 (QGTP…AAST) and 346 to 369 (SGTSAGSSTSRDVVPSPDTQEKGA). Residues Ser-250, Ser-259, Ser-283, Ser-287, and Ser-299 each carry the phosphoserine modification. A compositionally biased stretch (low complexity) spans 259–291 (SPLSSPLSSMKSSISSPPSHCSVKSPVSSPNNV). Over residues 292–329 (TLRSSVSSPANINNSRCSVSSPSNTNNRSTLSSPAAST) the composition is skewed to polar residues. The segment covering 346–355 (SGTSAGSSTS) has biased composition (low complexity). The Zn(2+) site is built by Cys-603, Cys-606, Cys-620, Cys-623, Cys-639, Cys-645, Cys-655, and Cys-658. 2 NR C4-type zinc fingers span residues 603-623 (CLVCGDEASGCHYGVVTCGSC) and 639-663 (CAGRNDCIIDKIRRKNCPACRLQKC). A DNA-binding region (nuclear receptor) is located at residues 603 to 668 (CLVCGDEASG…RLQKCLQAGM (66 aa)). Residues 669 to 725 (NLGARKSKKLGKLKGIHEEQPQQQQPPPPPPPPQSPEEGTTYIAPAKEPSVNTALVP) form a hinge region. Positions 684–710 (IHEEQPQQQQPPPPPPPPQSPEEGTTY) are disordered. Over residues 692 to 703 (QQPPPPPPPPQS) the composition is skewed to pro residues. The NR LBD domain occupies 726 to 964 (QLSTISRALT…EFPAMLVEII (239 aa)). 21-hydroxyprogesterone-binding residues include Asn-770 and Gln-776. Aldosterone is bound by residues Asn-770 and Gln-776. The progesterone site is built by Asn-770 and Gln-776. Positions 782-785 (KWAK) are important for coactivator binding. Positions 817 and 945 each coordinate 21-hydroxyprogesterone. Aldosterone contacts are provided by Arg-817 and Thr-945. Arg-817 and Thr-945 together coordinate progesterone.

Belongs to the nuclear hormone receptor family. NR3 subfamily. Heteromultimeric cytoplasmic complex with HSP90, HSP70, and FKBP4, in the absence of ligand. After ligand binding, it translocates to the nucleus and binds to DNA as a homodimer and as a heterodimer with NR3C1. Binds the coactivator NCOA2. May interact with HSD11B2 in the absence of ligand. Binds the coactivators NCOA1, TIF1 and NRIP1. Phosphorylated.

The protein resides in the cytoplasm. The protein localises to the nucleus. It localises to the endoplasmic reticulum membrane. Its function is as follows. Receptor for both mineralocorticoids (MC) such as aldosterone and glucocorticoids (GC) such as corticosterone or cortisol. Binds to mineralocorticoid response elements (MRE) and transactivates target genes. The effect of MC is to increase ion and water transport and thus raise extracellular fluid volume and blood pressure and lower potassium levels. In Aotus nancymaae (Ma's night monkey), this protein is Mineralocorticoid receptor (NR3C2).